The following is an 839-amino-acid chain: Taste receptor type 1 member 2 (839 aa).

An N-terminal signal peptide occupies residues 1–19 (MGPRAKTICSLFFLLWVLA). At 20–566 (EPAENSDFYL…VFLEWHEAPT (547 aa)) the chain is on the extracellular side. N-linked (GlcNAc...) asparagine glycans are attached at residues N84, N248, N292, N312, N368, N407, N428, N487, and N527. The helical transmembrane segment at 567-587 (IAVALLAALGFLSTLAILVIF) threads the bilayer. The Cytoplasmic portion of the chain corresponds to 588 to 602 (WRHFQTPIVRSAGGP). Residues 603–623 (MCFLMLTLLLVAYMVVPVYVG) traverse the membrane as a helical segment. Over 624–635 (PPKVSTCLCRQA) the chain is Extracellular. Residues 636-656 (LFPLCFTICISCIAVRSFQIV) form a helical membrane-spanning segment. Topologically, residues 657–681 (CAFKMASRFPRAYSYWVRYQGPYVS) are cytoplasmic. Residues 682–702 (MAFITVLKMVIVVIGMLATGL) form a helical membrane-spanning segment. The Extracellular portion of the chain corresponds to 703–727 (SPTTRTDPDDPKITIVSCNPNYRNS). A helical membrane pass occupies residues 728–748 (LLFNTSLDLLLSVVGFSFAYM). Topologically, residues 749-760 (GKELPTNYNEAK) are cytoplasmic. Residues 761–781 (FITLSMTFYFTSSVSLCTFMS) form a helical membrane-spanning segment. The Extracellular segment spans residues 782–784 (AYS). A helical membrane pass occupies residues 785–805 (GVLVTIVDLLVTVLNLLAISL). Residues 806–839 (GYFGPKCYMILFYPERNTSAYFNSMIQGYTMRRD) are Cytoplasmic-facing.

Belongs to the G-protein coupled receptor 3 family. TAS1R subfamily. As to quaternary structure, forms heterodimers with TAS1R3.

Its subcellular location is the cell membrane. Functionally, putative taste receptor. TAS1R2/TAS1R3 recognizes diverse natural and synthetic sweeteners. The polypeptide is Taste receptor type 1 member 2 (TAS1R2) (Pan troglodytes (Chimpanzee)).